A 342-amino-acid chain; its full sequence is Apurinic-apyrimidinic endonuclease 1 (342 aa).

Zn(2+) is bound by residues H61, E136, D170, H173, H207, D220, H222, and E252. Basic and acidic residues predominate over residues 299–310 (HLNKFEKKEAKK). Residues 299–342 (HLNKFEKKEAKKDRKKKSKDGDQTTLLLRKKQKLGNAEVKSLDE) are disordered.

This sequence belongs to the AP endonuclease 2 family. The cofactor is Zn(2+).

It localises to the nucleus. Its function is as follows. DNA repair enzyme that cleaves apurinic/apyrimidinic (AP) sites and removes 3'-blocking groups present at single strand breaks of damaged DNA. Provides back-up AP endonuclease (APE) activity to apn2 together with uve1. In Schizosaccharomyces pombe (strain 972 / ATCC 24843) (Fission yeast), this protein is Apurinic-apyrimidinic endonuclease 1 (apn1).